Reading from the N-terminus, the 332-residue chain is Mediator of RNA polymerase II transcription subunit 3 (332 aa).

2 disordered regions span residues 125-206 and 221-242; these read EPVR…PGAT and SPLNGISPSRKPAQPHHQTTPS. Low complexity predominate over residues 132–143; sequence SPSYRRPSNRSS. Polar residues predominate over residues 144–153; sequence ADTPSSNAPT. 2 stretches are compositionally biased toward low complexity: residues 155-166 and 184-200; these read SAAVVSGAALVA and PSVSASVVPSANSSGPA.

This sequence belongs to the Mediator complex subunit 3 family. As to quaternary structure, component of the Mediator complex.

The protein resides in the nucleus. Its function is as follows. Component of the Mediator complex, a coactivator involved in regulated gene transcription of nearly all RNA polymerase II-dependent genes. Mediator functions as a bridge to convey information from gene-specific regulatory proteins to the basal RNA polymerase II transcription machinery. Mediator is recruited to promoters by direct interactions with regulatory proteins and serves as a scaffold for the assembly of a functional preinitiation complex with RNA polymerase II and the general transcription factors. The chain is Mediator of RNA polymerase II transcription subunit 3 (PGD1) from Eremothecium gossypii (strain ATCC 10895 / CBS 109.51 / FGSC 9923 / NRRL Y-1056) (Yeast).